A 203-amino-acid chain; its full sequence is Small ribosomal subunit protein uS4 (203 aa).

The 62-residue stretch at 93-154 folds into the S4 RNA-binding domain; sequence RRLDNVVYRC…KSRNLDAVAD (62 aa).

Belongs to the universal ribosomal protein uS4 family. As to quaternary structure, part of the 30S ribosomal subunit. Contacts protein S5. The interaction surface between S4 and S5 is involved in control of translational fidelity.

Functionally, one of the primary rRNA binding proteins, it binds directly to 16S rRNA where it nucleates assembly of the body of the 30S subunit. With S5 and S12 plays an important role in translational accuracy. The sequence is that of Small ribosomal subunit protein uS4 from Chlorobaculum tepidum (strain ATCC 49652 / DSM 12025 / NBRC 103806 / TLS) (Chlorobium tepidum).